A 211-amino-acid polypeptide reads, in one-letter code: FMN-dependent NADH:quinone oxidoreductase 3 (211 aa).

S17 to S19 contributes to the FMN binding site.

This sequence belongs to the azoreductase type 1 family. Homodimer. The cofactor is FMN.

It catalyses the reaction 2 a quinone + NADH + H(+) = 2 a 1,4-benzosemiquinone + NAD(+). The catalysed reaction is N,N-dimethyl-1,4-phenylenediamine + anthranilate + 2 NAD(+) = 2-(4-dimethylaminophenyl)diazenylbenzoate + 2 NADH + 2 H(+). Functionally, quinone reductase that provides resistance to thiol-specific stress caused by electrophilic quinones. In terms of biological role, also exhibits azoreductase activity. Catalyzes the reductive cleavage of the azo bond in aromatic azo compounds to the corresponding amines. The protein is FMN-dependent NADH:quinone oxidoreductase 3 of Halalkalibacterium halodurans (strain ATCC BAA-125 / DSM 18197 / FERM 7344 / JCM 9153 / C-125) (Bacillus halodurans).